Reading from the N-terminus, the 466-residue chain is Soluble pyridine nucleotide transhydrogenase (466 aa).

36 to 45 (ERYQNVGGGC) contacts FAD.

Belongs to the class-I pyridine nucleotide-disulfide oxidoreductase family. FAD is required as a cofactor.

Its subcellular location is the cytoplasm. The enzyme catalyses NAD(+) + NADPH = NADH + NADP(+). Conversion of NADPH, generated by peripheral catabolic pathways, to NADH, which can enter the respiratory chain for energy generation. This Escherichia coli O6:K15:H31 (strain 536 / UPEC) protein is Soluble pyridine nucleotide transhydrogenase.